A 631-amino-acid chain; its full sequence is Forkhead box protein O1 (631 aa).

The segment covering 1–11 (MAEAPQPPPPL) has biased composition (pro residues). 4 disordered regions span residues 1–57 (MAEA…PAAG), 90–147 (DIRQ…SRRN), 223–324 (SSWW…MPEQ), and 372–404 (PNSSTQSSPASMMQQSGYLFTSPNTSLGSPNSE). Low complexity-rich tracts occupy residues 37 to 48 (NPSSSANSSPAP) and 100 to 135 (QQQQQHSQQQQEALTLLAPSVPSALSPASSPSPLGA). A DNA-binding region (fork-head) is located at residues 149 to 243 (WGNLSYADLI…KNGKSPRRRA (95 aa)). Basic residues predominate over residues 253–264 (AKSRGRAAKKKA). Residues 265–282 (SMQSSQDGSSDSPGSQFS) are compositionally biased toward low complexity. 2 stretches are compositionally biased toward polar residues: residues 303–315 (RPRTSSNASTISG) and 381–403 (ASMMQQSGYLFTSPNTSLGSPNS).

Post-translationally, phosphorylated by AKT1; insulin-induced. In terms of processing, IGF1 rapidly induces phosphorylation of Thr-28, Ser-245 and Ser-308. Phosphorylation of Ser-245 decreases DNA-binding activity and promotes the phosphorylation of Thr-28, and Ser-308, which leads to nuclear exclusion and loss of function. Phosphorylation of Ser-318 is independent of IGF1 and leads to reduced function. As to expression, localized to the animal hemisphere during early cleavage stages. At early tadpole stages, expressed in the branchial arches, pronephros and liver. Within the head, expressed in the forming thyroid gland and in head mesenchyme anterior to the eyes.

The protein resides in the cytoplasm. It localises to the nucleus. Its function is as follows. Transcription factor that regulates metabolic homeostasis in response to oxidative stress. Binds to the consensus sequence 5'-TT[G/A]TTTTG-3' and the related Daf-16 family binding element (DBE) with consensus sequence 5'-TT[G/A]TTTAC-3'. Main regulator of redox balance and osteoblast numbers and controls bone mass. Orchestrates the endocrine function of the skeleton in regulating glucose metabolism. Also acts as a key regulator of chondrogenic commitment of skeletal progenitor cells in response to lipid availability: when lipids levels are low, translocates to the nucleus and promotes expression of sox9, which induces chondrogenic commitment and suppresses fatty acid oxidation. Acts synergistically with atf4 to suppress osteocalcin/bglap activity, increasing glucose levels and triggering glucose intolerance and insulin insensitivity. Also suppresses the transcriptional activity of runx2, an upstream activator of osteocalcin/bglap. May act as a positive regulator of apoptosis in cardiac smooth muscle cells as a result of its transcriptional activation of pro-apoptotic genes. This chain is Forkhead box protein O1, found in Xenopus laevis (African clawed frog).